The following is a 426-amino-acid chain: 3-phosphoshikimate 1-carboxyvinyltransferase (426 aa).

3-phosphoshikimate is bound by residues Lys-22, Ser-23, and Arg-27. Lys-22 is a binding site for phosphoenolpyruvate. Phosphoenolpyruvate contacts are provided by Gly-96 and Arg-124. The 3-phosphoshikimate site is built by Ser-170, Ser-171, Gln-172, Ser-198, Asp-314, Asn-337, and Lys-341. Gln-172 is a phosphoenolpyruvate binding site. Asp-314 acts as the Proton acceptor in catalysis. Residues Arg-345, Arg-387, and Lys-412 each coordinate phosphoenolpyruvate.

This sequence belongs to the EPSP synthase family. As to quaternary structure, monomer.

It is found in the cytoplasm. It carries out the reaction 3-phosphoshikimate + phosphoenolpyruvate = 5-O-(1-carboxyvinyl)-3-phosphoshikimate + phosphate. Its pathway is metabolic intermediate biosynthesis; chorismate biosynthesis; chorismate from D-erythrose 4-phosphate and phosphoenolpyruvate: step 6/7. In terms of biological role, catalyzes the transfer of the enolpyruvyl moiety of phosphoenolpyruvate (PEP) to the 5-hydroxyl of shikimate-3-phosphate (S3P) to produce enolpyruvyl shikimate-3-phosphate and inorganic phosphate. This Shewanella loihica (strain ATCC BAA-1088 / PV-4) protein is 3-phosphoshikimate 1-carboxyvinyltransferase.